The primary structure comprises 179 residues: ATP-dependent protease subunit HslV (179 aa).

Threonine 7 is a catalytic residue. The Na(+) site is built by glycine 162, cysteine 165, and threonine 168.

Belongs to the peptidase T1B family. HslV subfamily. In terms of assembly, a double ring-shaped homohexamer of HslV is capped on each side by a ring-shaped HslU homohexamer. The assembly of the HslU/HslV complex is dependent on binding of ATP.

It is found in the cytoplasm. The catalysed reaction is ATP-dependent cleavage of peptide bonds with broad specificity.. Its activity is regulated as follows. Allosterically activated by HslU binding. Functionally, protease subunit of a proteasome-like degradation complex believed to be a general protein degrading machinery. The polypeptide is ATP-dependent protease subunit HslV (Bordetella pertussis (strain Tohama I / ATCC BAA-589 / NCTC 13251)).